The sequence spans 214 residues: U3 small nucleolar RNA-associated protein 16 (214 aa).

Basic and acidic residues predominate over residues 1-10 (MSNGHVKFDA). A disordered region spans residues 1 to 106 (MSNGHVKFDA…KSVNETEVTD (106 aa)). At serine 16 the chain carries Phosphoserine. A compositionally biased stretch (basic and acidic residues) spans 22 to 41 (DRQDDVLVISKKDKEVHSSS). Residues 42–52 (DEESDDDDAPQ) show a composition bias toward acidic residues. A phosphoserine mark is found at serine 45, serine 65, and serine 144. Positions 54 to 75 (EGLHSGKSEVESQITQREEAIR) are enriched in basic and acidic residues. The segment at 182–214 (STTQDSKTLPPKKESSIIRSKDRWLNRKALNKG) is disordered. The segment covering 192–206 (PKKESSIIRSKDRWL) has biased composition (basic and acidic residues).

This sequence belongs to the UTP16 family. As to quaternary structure, part of the small subunit (SSU) processome composed of at least 40 protein subunits and the RNA chaperone small nucleolar RNA (snoRNA) U3. Interacts with snoRNA U3. Interacts with MPP10.

It is found in the nucleus. Its subcellular location is the nucleolus. Its function is as follows. Functions as part of the small subunit (SSU) processome, first precursor of the small eukaryotic ribosomal subunit that coordinates the first two steps of ribosome biogenesis in transcription of the primary transcript pre-RNA and pre-18S processing. During the assembly of the SSU processome in the nucleolus, many ribosome biogenesis factors, an RNA chaperone and ribosomal proteins associate with the nascent pre-rRNA and work in concert to generate RNA folding, modifications, rearrangements and cleavage as well as targeted degradation of pre-ribosomal RNA by the RNA exosome. Has a role in bud site selection maybe via the regulation of expression of bipolar budding components. The protein is U3 small nucleolar RNA-associated protein 16 (BUD21) of Saccharomyces cerevisiae (strain ATCC 204508 / S288c) (Baker's yeast).